Consider the following 397-residue polypeptide: Tryptophan synthase beta chain (397 aa).

Lysine 86 bears the N6-(pyridoxal phosphate)lysine mark.

It belongs to the TrpB family. Tetramer of two alpha and two beta chains. Pyridoxal 5'-phosphate serves as cofactor.

It carries out the reaction (1S,2R)-1-C-(indol-3-yl)glycerol 3-phosphate + L-serine = D-glyceraldehyde 3-phosphate + L-tryptophan + H2O. Its pathway is amino-acid biosynthesis; L-tryptophan biosynthesis; L-tryptophan from chorismate: step 5/5. Functionally, the beta subunit is responsible for the synthesis of L-tryptophan from indole and L-serine. The protein is Tryptophan synthase beta chain (trpB) of Buchnera aphidicola subsp. Diuraphis noxia.